A 224-amino-acid polypeptide reads, in one-letter code: Mammalian ependymin-related protein 1 (224 aa).

A signal peptide spans 1–37 (MPGRAPLHTVPGALGPWLLGCLWAWTLCGLCSLGAVG). Cystine bridges form between Cys-42–Cys-172, Cys-88–Cys-222, and Cys-113–Cys-210. 2 N-linked (GlcNAc...) asparagine glycosylation sites follow: Asn-130 and Asn-182.

Belongs to the ependymin family. In terms of assembly, homodimer. In terms of processing, N-glycosylated; the glycan contains mannose-6-phosphate moieties.

The protein resides in the lysosome lumen. It is found in the secreted. In terms of biological role, binds anionic lipids and gangliosides at acidic pH. In Macaca fascicularis (Crab-eating macaque), this protein is Mammalian ependymin-related protein 1 (EPDR1).